The following is an 821-amino-acid chain: Fibroblast growth factor receptor 2 (821 aa).

A signal peptide spans 1–21; it reads MVSWGRFICLVVVTMATLSLA. The Extracellular portion of the chain corresponds to 22–377; that stretch reads RPSFSLVEDT…EITASPDYLE (356 aa). The 101-residue stretch at 25 to 125 folds into the Ig-like C2-type 1 domain; sequence FSLVEDTTLE…ETWYFMVNVT (101 aa). A disulfide bond links cysteine 62 and cysteine 107. Asparagine 83 and asparagine 123 each carry an N-linked (GlcNAc...) asparagine glycan. Residues 131 to 144 are compositionally biased toward acidic residues; it reads GDDEDDTDGAEDFV. The disordered stretch occupies residues 131–151; sequence GDDEDDTDGAEDFVSENSNNK. Ig-like C2-type domains follow at residues 154–247 and 256–358; these read PYWT…YHLD and PILQ…AWLT. The segment at 161–178 is heparin-binding; the sequence is KMEKRLHAVPAANTVKFR. A disulfide bridge connects residues cysteine 179 and cysteine 231. Residues asparagine 228, asparagine 241, asparagine 265, asparagine 297, asparagine 318, and asparagine 331 are each glycosylated (N-linked (GlcNAc...) asparagine). Cysteine 278 and cysteine 342 are disulfide-bonded. The chain crosses the membrane as a helical span at residues 378–398; that stretch reads IAIYCIGVFLIACMVVTVILC. Over 399-821 the chain is Cytoplasmic; it reads RMKNTTKKPD…YPHINGSVKT (423 aa). Position 466 is a phosphotyrosine; by autocatalysis (tyrosine 466). Positions 481 to 770 constitute a Protein kinase domain; it reads LTLGKPLGEG…LTLTTNEEYL (290 aa). Residues 487–495, lysine 517, 565–567, and asparagine 571 each bind ATP; these read LGEGCFGQV and EYA. A phosphotyrosine; by autocatalysis mark is found at tyrosine 586 and tyrosine 588. The Proton acceptor role is filled by aspartate 626. Tyrosine 656, tyrosine 657, and tyrosine 769 each carry phosphotyrosine; by autocatalysis. Serine 780 carries the phosphoserine modification.

The protein belongs to the protein kinase superfamily. Tyr protein kinase family. Fibroblast growth factor receptor subfamily. As to quaternary structure, monomer. Homodimer after ligand binding. Interacts predominantly with FGF1 and FGF2, but can also interact with FGF3, FGF4, FGF6, FGF7, FGF8, FGF9, FGF10, FGF17, FGF18 and FGF22 (in vitro). Ligand specificity is determined by tissue-specific expression of isoforms, and differences in the third Ig-like domain are crucial for ligand specificity. Isoform 1 has high affinity for FGF1 and FGF2, but low affinity for FGF7. Isoform 3 has high affinity for FGF1 and FGF7, and has much higher affinity for FGF7 than isoform 1 (in vitro). Affinity for fibroblast growth factors (FGFs) is increased by heparan sulfate glycosaminoglycans that function as coreceptors. Likewise, KLB increases the affinity for FGF19 and FGF21. Interacts with PLCG1, GRB2 and PAK4. Interacts with FLRT2. Autophosphorylated. Binding of FGF family members together with heparan sulfate proteoglycan or heparin promotes receptor dimerization and autophosphorylation on several tyrosine residues. Autophosphorylation occurs in trans between the two FGFR molecules present in the dimer. Phosphorylation at Tyr-769 is essential for interaction with PLCG1. In terms of processing, N-glycosylated in the endoplasmic reticulum. The N-glycan chains undergo further maturation to an Endo H-resistant form in the Golgi apparatus. Post-translationally, ubiquitinated. FGFR2 is rapidly ubiquitinated after autophosphorylation, leading to internalization and degradation. Subject to degradation both in lysosomes and by the proteasome.

Its subcellular location is the cell membrane. It is found in the golgi apparatus. It localises to the cytoplasmic vesicle. The protein localises to the secreted. It catalyses the reaction L-tyrosyl-[protein] + ATP = O-phospho-L-tyrosyl-[protein] + ADP + H(+). Its activity is regulated as follows. Present in an inactive conformation in the absence of bound ligand. Ligand binding leads to dimerization and activation by autophosphorylation on tyrosine residues. Inhibited by ARQ 523 and ARQ 069; these compounds maintain the kinase in an inactive conformation and inhibit autophosphorylation. In terms of biological role, tyrosine-protein kinase that acts as a cell-surface receptor for fibroblast growth factors and plays an essential role in the regulation of cell proliferation, differentiation, migration and apoptosis, and in the regulation of embryonic development. Required for normal embryonic patterning, trophoblast function, limb bud development, lung morphogenesis, osteogenesis and skin development. Plays an essential role in the regulation of osteoblast differentiation, proliferation and apoptosis, and is required for normal skeleton development. Promotes cell proliferation in keratinocytes and immature osteoblasts, but promotes apoptosis in differentiated osteoblasts. Phosphorylates PLCG1, FRS2 and PAK4. Ligand binding leads to the activation of several signaling cascades. Activation of PLCG1 leads to the production of the cellular signaling molecules diacylglycerol and inositol 1,4,5-trisphosphate. Phosphorylation of FRS2 triggers recruitment of GRB2, GAB1, PIK3R1 and SOS1, and mediates activation of RAS, MAPK1/ERK2, MAPK3/ERK1 and the MAP kinase signaling pathway, as well as of the AKT1 signaling pathway. FGFR2 signaling is down-regulated by ubiquitination, internalization and degradation. Mutations that lead to constitutive kinase activation or impair normal FGFR2 maturation, internalization and degradation lead to aberrant signaling. Over-expressed FGFR2 promotes activation of STAT1. The protein is Fibroblast growth factor receptor 2 (FGFR2) of Homo sapiens (Human).